The primary structure comprises 452 residues: GPI mannosyltransferase 2 (452 aa).

Topologically, residues methionine 1–lysine 7 are cytoplasmic. The chain crosses the membrane as a helical span at residues leucine 8–proline 28. The Lumenal portion of the chain corresponds to aspartate 29–alanine 113. Residues leucine 114–leucine 134 form a helical membrane-spanning segment. Residues tyrosine 135 to serine 161 are Cytoplasmic-facing. The helical transmembrane segment at isoleucine 162–leucine 182 threads the bilayer. Topologically, residues glutamate 183–asparagine 209 are lumenal. Residues glycine 210–glycine 230 traverse the membrane as a helical segment. Residues serine 231–leucine 238 are Cytoplasmic-facing. Residues phenylalanine 239–isoleucine 259 traverse the membrane as a helical segment. At tyrosine 260–serine 284 the chain is on the lumenal side. A helical membrane pass occupies residues phenylalanine 285 to proline 305. Over tyrosine 306 to leucine 327 the chain is Cytoplasmic. Residues proline 328–isoleucine 348 traverse the membrane as a helical segment. The Lumenal portion of the chain corresponds to arginine 349–glutamate 370. A helical transmembrane segment spans residues histidine 371–valine 391. The Cytoplasmic portion of the chain corresponds to histidine 392 to arginine 398. Residues leucine 399–phenylalanine 419 traverse the membrane as a helical segment. Over glutamine 420–lysine 426 the chain is Lumenal. The helical transmembrane segment at alanine 427–asparagine 447 threads the bilayer. Residues asparagine 448–threonine 452 are Cytoplasmic-facing.

It belongs to the PIGV family.

The protein localises to the endoplasmic reticulum membrane. The protein operates within glycolipid biosynthesis; glycosylphosphatidylinositol-anchor biosynthesis. Functionally, mannosyltransferase involved in glycosylphosphatidylinositol-anchor biosynthesis. Transfers the second mannose to the glycosylphosphatidylinositol during GPI precursor assembly. Required for the GPI-mediated endoplasmic reticulum exit and proper targeting to the cell surface of chp. Required for GPI-mediated membrane attachment of chp, qsm and Cont. Essential for microvillar stability in the rhabdomere. The polypeptide is GPI mannosyltransferase 2 (Drosophila pseudoobscura pseudoobscura (Fruit fly)).